The following is a 632-amino-acid chain: Chaperone protein HtpG (632 aa).

The interval 1–339 (MAHETMSFQA…SADLPLNVSR (339 aa)) is a; substrate-binding. The segment at 340–559 (EILQESRDVK…DNDMSGYLQR (220 aa)) is b. Residues 560-632 (MLKAAGQNAP…TNALLLSRAA (73 aa)) form a c region.

The protein belongs to the heat shock protein 90 family. In terms of assembly, homodimer.

It localises to the cytoplasm. Molecular chaperone. Has ATPase activity. This is Chaperone protein HtpG from Burkholderia ambifaria (strain ATCC BAA-244 / DSM 16087 / CCUG 44356 / LMG 19182 / AMMD) (Burkholderia cepacia (strain AMMD)).